The chain runs to 465 residues: Glutamate--tRNA ligase (465 aa).

The 'HIGH' region motif lies at Pro11–Asn21. The segment at Gly118–Pro139 is disordered. A 'KMSKS' region motif is present at residues Lys243–Arg247. Lys246 is a binding site for ATP.

Belongs to the class-I aminoacyl-tRNA synthetase family. Glutamate--tRNA ligase type 1 subfamily. Monomer.

It is found in the cytoplasm. It catalyses the reaction tRNA(Glu) + L-glutamate + ATP = L-glutamyl-tRNA(Glu) + AMP + diphosphate. In terms of biological role, catalyzes the attachment of glutamate to tRNA(Glu) in a two-step reaction: glutamate is first activated by ATP to form Glu-AMP and then transferred to the acceptor end of tRNA(Glu). This Ralstonia pickettii (strain 12J) protein is Glutamate--tRNA ligase.